We begin with the raw amino-acid sequence, 256 residues long: N-acetylglucosaminyldiphosphoundecaprenol N-acetyl-beta-D-mannosaminyltransferase (256 aa).

Belongs to the glycosyltransferase 26 family. TagA/TarA subfamily.

It catalyses the reaction UDP-N-acetyl-alpha-D-mannosamine + N-acetyl-alpha-D-glucosaminyl-di-trans,octa-cis-undecaprenyl diphosphate = N-acetyl-beta-D-mannosaminyl-(1-&gt;4)-N-acetyl-alpha-D-glucosaminyl di-trans,octa-cis-undecaprenyl diphosphate + UDP + H(+). Its pathway is cell wall biogenesis; poly(glycerol phosphate) teichoic acid biosynthesis. Functionally, catalyzes the conversion of GlcNAc-PP-undecaprenol into ManNAc-GlcNAc-PP-undecaprenol, the first committed lipid intermediate in the de novo synthesis of teichoic acid. This chain is N-acetylglucosaminyldiphosphoundecaprenol N-acetyl-beta-D-mannosaminyltransferase, found in Bacillus subtilis (strain 168).